The chain runs to 166 residues: Ribosome-binding factor A (166 aa).

The segment at 122–166 (HVADETDVEDSTDHEDDVTNSEDETKHVDIDTDSEEGTNTDGKAQ) is disordered. Residues 126-143 (ETDVEDSTDHEDDVTNSE) are compositionally biased toward acidic residues.

Belongs to the RbfA family. In terms of assembly, monomer. Binds 30S ribosomal subunits, but not 50S ribosomal subunits or 70S ribosomes.

It is found in the cytoplasm. Functionally, one of several proteins that assist in the late maturation steps of the functional core of the 30S ribosomal subunit. Associates with free 30S ribosomal subunits (but not with 30S subunits that are part of 70S ribosomes or polysomes). Required for efficient processing of 16S rRNA. May interact with the 5'-terminal helix region of 16S rRNA. The chain is Ribosome-binding factor A from Pseudoalteromonas translucida (strain TAC 125).